We begin with the raw amino-acid sequence, 511 residues long: Maturase K (511 aa).

The protein belongs to the intron maturase 2 family. MatK subfamily.

The protein localises to the plastid. Usually encoded in the trnK tRNA gene intron. Probably assists in splicing its own and other chloroplast group II introns. The protein is Maturase K of Lathraea clandestina (Purple toothwort).